A 63-amino-acid chain; its full sequence is Anionic peptide 10.1 (63 aa).

Positions 1–20 (MISRFCLLFLLVFVVSKIQA) are cleaved as a signal peptide.

This sequence belongs to the non-disulfide-bridged peptide (NDBP) superfamily. Long chain multifunctional peptide (group 2) family. Expressed by the venom gland.

It localises to the secreted. This Lychas mucronatus (Chinese swimming scorpion) protein is Anionic peptide 10.1.